The sequence spans 426 residues: Histidine--tRNA ligase (426 aa).

It belongs to the class-II aminoacyl-tRNA synthetase family. In terms of assembly, homodimer.

Its subcellular location is the cytoplasm. The catalysed reaction is tRNA(His) + L-histidine + ATP = L-histidyl-tRNA(His) + AMP + diphosphate + H(+). In Geobacillus kaustophilus (strain HTA426), this protein is Histidine--tRNA ligase.